Reading from the N-terminus, the 196-residue chain is Probable GTP-binding protein EngB (196 aa).

Residues 21 to 195 enclose the EngB-type G domain; it reads DVSEICLIGR…YELIDKLLGS (175 aa). GTP is bound by residues 29-36, 56-60, 75-78, 142-145, and 174-176; these read GRSNVGKS, GKTRL, DAPG, TKLD, and ISN. Mg(2+) contacts are provided by Ser-36 and Thr-58.

This sequence belongs to the TRAFAC class TrmE-Era-EngA-EngB-Septin-like GTPase superfamily. EngB GTPase family. It depends on Mg(2+) as a cofactor.

Its function is as follows. Necessary for normal cell division and for the maintenance of normal septation. The sequence is that of Probable GTP-binding protein EngB from Mycoplasma mycoides subsp. mycoides SC (strain CCUG 32753 / NCTC 10114 / PG1).